Consider the following 278-residue polypeptide: Protein D7 (278 aa).

CHHC U11-48K-type zinc fingers lie at residues 6 to 33 (LMQC…RENN) and 40 to 67 (LATC…EYRV). The Zn(2+) site is built by Cys9, His15, His25, Cys29, Cys43, His49, His59, and Cys63. Residues 149 to 164 (QVKQNQPEPEPFTSSE) show a composition bias toward polar residues. Disordered stretches follow at residues 149–230 (QVKQ…PKAN) and 249–278 (PGGS…WVRK). The span at 165–175 (RNYDPRSKEPP) shows a compositional bias: basic and acidic residues. Over residues 188-200 (ATTNTNPWCRQTG) the composition is skewed to polar residues. Residues 214-225 (SSDEGPRNKEFP) are compositionally biased toward basic and acidic residues.

Belongs to the UPF0224 (FAM112) family.

The protein resides in the cytoplasm. Involved in oocyte maturation. It is possible that D7 is required at a certain point in the maturation process and that maturation cannot proceed beyond this point unless a threshold amount of D7 protein is provided. The polypeptide is Protein D7 (d7) (Xenopus laevis (African clawed frog)).